A 483-amino-acid chain; its full sequence is Serine/threonine-protein kinase BSK4 (483 aa).

Glycine 2 carries the N-myristoyl glycine lipid modification. The region spanning 56–322 (ENVVSEHGET…DTEVLSHVLM (267 aa)) is the Protein kinase domain. ATP-binding positions include 62-70 (HGETAPNVV) and lysine 84. Aspartate 178 (proton acceptor) is an active-site residue.

This sequence belongs to the protein kinase superfamily. Ser/Thr protein kinase family.

It localises to the cell membrane. The catalysed reaction is L-seryl-[protein] + ATP = O-phospho-L-seryl-[protein] + ADP + H(+). It catalyses the reaction L-threonyl-[protein] + ATP = O-phospho-L-threonyl-[protein] + ADP + H(+). Functionally, probable serine/threonine kinase that acts as a positive regulator of brassinosteroid (BR) signaling downstream of the receptor kinase BRI1. Functions redundantly with BSK3, BSK6, BSK7 and BSK8. In Arabidopsis thaliana (Mouse-ear cress), this protein is Serine/threonine-protein kinase BSK4.